We begin with the raw amino-acid sequence, 358 residues long: Alanine racemase (358 aa).

The active-site Proton acceptor; specific for D-alanine is K35. K35 is modified (N6-(pyridoxal phosphate)lysine). Position 130 (R130) interacts with substrate. Y255 (proton acceptor; specific for L-alanine) is an active-site residue. M303 contacts substrate.

This sequence belongs to the alanine racemase family. The cofactor is pyridoxal 5'-phosphate.

It catalyses the reaction L-alanine = D-alanine. Its pathway is amino-acid biosynthesis; D-alanine biosynthesis; D-alanine from L-alanine: step 1/1. Functionally, catalyzes the interconversion of L-alanine and D-alanine. May also act on other amino acids. The protein is Alanine racemase (alr) of Shewanella oneidensis (strain ATCC 700550 / JCM 31522 / CIP 106686 / LMG 19005 / NCIMB 14063 / MR-1).